Here is a 147-residue protein sequence, read N- to C-terminus: Ponticulin-like protein C4 (147 aa).

The N-terminal stretch at 1–20 is a signal peptide; sequence MKFTKSLLLLIVAVFASSNA. The GPI-like-anchor amidated asparagine moiety is linked to residue Asn118. N-linked (GlcNAc...) asparagine glycosylation occurs at Asn118. The propeptide at 119–147 is removed in mature form; the sequence is SSESDSSDSTRIGASFALAAAALLSMIAL.

This sequence belongs to the ponticulin family. In terms of processing, the GPI-like-anchor contains a phosphoceramide group, rather than a phosphatidyl group.

The protein localises to the cell membrane. This is Ponticulin-like protein C4 (ponC4) from Dictyostelium discoideum (Social amoeba).